The following is a 194-amino-acid chain: Superoxide dismutase [Cu-Zn] (194 aa).

An N-terminal signal peptide occupies residues 1 to 20 (MTRPLALIIFLVAILTNTDP). 2 residues coordinate Cu cation: His85 and His104. A disulfide bridge links Cys96 with Cys188. Residues His104, His112, His121, and Asp124 each coordinate Zn(2+). A Cu cation-binding site is contributed by His162.

This sequence belongs to the Cu-Zn superoxide dismutase family. Homodimer. It depends on Cu cation as a cofactor. Zn(2+) serves as cofactor.

The enzyme catalyses 2 superoxide + 2 H(+) = H2O2 + O2. Destroys radicals which are normally produced within the cells and which are toxic to biological systems. The chain is Superoxide dismutase [Cu-Zn] from Ramazzottius varieornatus (Water bear).